A 458-amino-acid polypeptide reads, in one-letter code: tRNA modification GTPase MnmE (458 aa).

The (6S)-5-formyl-5,6,7,8-tetrahydrofolate site is built by arginine 26, glutamate 88, and arginine 127. Positions 224-378 (GLSTAIIGRP…IEDRINQLFF (155 aa)) constitute a TrmE-type G domain. Residue asparagine 234 coordinates K(+). GTP contacts are provided by residues 234–239 (NVGKSS), 253–259 (TDIAGTT), and 278–281 (DTAG). Serine 238 lines the Mg(2+) pocket. K(+) is bound by residues threonine 253, isoleucine 255, and threonine 258. A Mg(2+)-binding site is contributed by threonine 259. Lysine 458 lines the (6S)-5-formyl-5,6,7,8-tetrahydrofolate pocket.

Belongs to the TRAFAC class TrmE-Era-EngA-EngB-Septin-like GTPase superfamily. TrmE GTPase family. As to quaternary structure, homodimer. Heterotetramer of two MnmE and two MnmG subunits. K(+) serves as cofactor.

The protein localises to the cytoplasm. Exhibits a very high intrinsic GTPase hydrolysis rate. Involved in the addition of a carboxymethylaminomethyl (cmnm) group at the wobble position (U34) of certain tRNAs, forming tRNA-cmnm(5)s(2)U34. The chain is tRNA modification GTPase MnmE from Streptococcus pyogenes serotype M18 (strain MGAS8232).